Here is a 101-residue protein sequence, read N- to C-terminus: Large ribosomal subunit protein bL21 (101 aa).

It belongs to the bacterial ribosomal protein bL21 family. As to quaternary structure, part of the 50S ribosomal subunit. Contacts protein L20.

Its function is as follows. This protein binds to 23S rRNA in the presence of protein L20. This Sulfurovum sp. (strain NBC37-1) protein is Large ribosomal subunit protein bL21.